The following is a 229-amino-acid chain: Potassium/proton antiporter CemA (229 aa).

Transmembrane regions (helical) follow at residues 7–27 (LTPL…SISF), 106–126 (IILH…YSIL), and 189–209 (IISG…KYWI).

It belongs to the CemA family.

Its subcellular location is the plastid. The protein localises to the chloroplast inner membrane. The enzyme catalyses K(+)(in) + H(+)(out) = K(+)(out) + H(+)(in). Its function is as follows. Contributes to K(+)/H(+) antiport activity by supporting proton efflux to control proton extrusion and homeostasis in chloroplasts in a light-dependent manner to modulate photosynthesis. Prevents excessive induction of non-photochemical quenching (NPQ) under continuous-light conditions. Indirectly promotes efficient inorganic carbon uptake into chloroplasts. The sequence is that of Potassium/proton antiporter CemA from Liriodendron tulipifera (Tuliptree).